Consider the following 248-residue polypeptide: Phosphate import ATP-binding protein PstB (248 aa).

The 243-residue stretch at Met1–Ile243 folds into the ABC transporter domain. Gly33 to Ser40 is an ATP binding site.

Belongs to the ABC transporter superfamily. Phosphate importer (TC 3.A.1.7) family. In terms of assembly, the complex is composed of two ATP-binding proteins (PstB), two transmembrane proteins (PstC and PstA) and a solute-binding protein (PstS).

The protein localises to the cell inner membrane. It catalyses the reaction phosphate(out) + ATP + H2O = ADP + 2 phosphate(in) + H(+). Its function is as follows. Part of the ABC transporter complex PstSACB involved in phosphate import. Responsible for energy coupling to the transport system. The chain is Phosphate import ATP-binding protein PstB from Rhodospirillum rubrum (strain ATCC 11170 / ATH 1.1.1 / DSM 467 / LMG 4362 / NCIMB 8255 / S1).